Consider the following 357-residue polypeptide: 3-isopropylmalate dehydrogenase, chloroplastic (357 aa).

Residues 1 to 29 constitute a chloroplast transit peptide; sequence MALQIAKRLLRCRADSVASSVRFFDRTFT. R120, R130, R151, and D238 together coordinate substrate. Mg(2+) is bound by residues D238, D262, and D266. NAD(+) is bound at residue 296–308; sequence GSAPDIAGKNLAN.

The protein belongs to the isocitrate and isopropylmalate dehydrogenases family. Homodimer. The cofactor is Mg(2+). Mn(2+) serves as cofactor.

It localises to the plastid. The protein resides in the chloroplast. The enzyme catalyses (2R,3S)-3-isopropylmalate + NAD(+) = 4-methyl-2-oxopentanoate + CO2 + NADH. It functions in the pathway amino-acid biosynthesis; L-leucine biosynthesis; L-leucine from 3-methyl-2-oxobutanoate: step 3/4. Catalyzes the oxidation of 3-carboxy-2-hydroxy-4-methylpentanoate (3-isopropylmalate) to 3-carboxy-4-methyl-2-oxopentanoate. The product decarboxylates to 4-methyl-2 oxopentanoate. The protein is 3-isopropylmalate dehydrogenase, chloroplastic of Solanum tuberosum (Potato).